The following is a 179-amino-acid chain: Ribulose bisphosphate carboxylase small subunit, chloroplastic 1/4 (179 aa).

Residues methionine 1–glutamine 58 constitute a chloroplast transit peptide.

It belongs to the RuBisCO small chain family. Heterohexadecamer of 8 large and 8 small subunits.

The protein localises to the plastid. It is found in the chloroplast. In terms of biological role, ruBisCO catalyzes two reactions: the carboxylation of D-ribulose 1,5-bisphosphate, the primary event in carbon dioxide fixation, as well as the oxidative fragmentation of the pentose substrate. Both reactions occur simultaneously and in competition at the same active site. Although the small subunit is not catalytic it is essential for maximal activity. The chain is Ribulose bisphosphate carboxylase small subunit, chloroplastic 1/4 (RBCS1) from Fritillaria agrestis (Stinkbells).